The sequence spans 636 residues: 1-deoxy-D-xylulose-5-phosphate synthase (636 aa).

Residues His-74 and Gly-115–Ser-117 contribute to the thiamine diphosphate site. Asp-146 lines the Mg(2+) pocket. Thiamine diphosphate is bound by residues Gly-147–Ala-148, Asn-175, Tyr-286, and Glu-367. Asn-175 provides a ligand contact to Mg(2+).

This sequence belongs to the transketolase family. DXPS subfamily. Homodimer. Mg(2+) serves as cofactor. Thiamine diphosphate is required as a cofactor.

It carries out the reaction D-glyceraldehyde 3-phosphate + pyruvate + H(+) = 1-deoxy-D-xylulose 5-phosphate + CO2. It functions in the pathway metabolic intermediate biosynthesis; 1-deoxy-D-xylulose 5-phosphate biosynthesis; 1-deoxy-D-xylulose 5-phosphate from D-glyceraldehyde 3-phosphate and pyruvate: step 1/1. In terms of biological role, catalyzes the acyloin condensation reaction between C atoms 2 and 3 of pyruvate and glyceraldehyde 3-phosphate to yield 1-deoxy-D-xylulose-5-phosphate (DXP). This chain is 1-deoxy-D-xylulose-5-phosphate synthase, found in Halothermothrix orenii (strain H 168 / OCM 544 / DSM 9562).